Consider the following 283-residue polypeptide: MDNEDQESLLLQGVPDNYGGVKVNLTEPMTIEDFVPKLRASLVYWSNQGTKGIWLKLADGLDNLIAPAKAEGFVCHHAEREYTMLTSWIADVPSTLPANASHRIGVGAFVLNKKTKEVLVVQEIDGHFKGTGVWKLPTGVVKEGENIWEGALREVEEETGIKTKFVEVLAFRESHQAFLEIKTDIFFLCELEPTTFEIKKQDSEILAAKWMPIEEYVNQPWNQKKELFRFMANICLKRLQEMEYMGFSKVLTTTSSGKESYLYCNTDHANLLNATRGLASTSG.

The Nudix hydrolase domain occupies 101-233; sequence SHRIGVGAFV…KKELFRFMAN (133 aa). The Nudix box motif lies at 139 to 160; sequence GVVKEGENIWEGALREVEEETG. 3 residues coordinate a divalent metal cation: Glu-154, Glu-158, and Glu-204.

It belongs to the Nudix hydrolase family. Requires Mg(2+) as cofactor. Mn(2+) is required as a cofactor. As to expression, expressed in stems and leaves. Weakly or not expressed in roots.

The catalysed reaction is ADP-D-ribose + H2O = D-ribose 5-phosphate + AMP + 2 H(+). It carries out the reaction NAD(+) + H2O = beta-nicotinamide D-ribonucleotide + AMP + 2 H(+). The enzyme catalyses NADH + H2O = reduced beta-nicotinamide D-ribonucleotide + AMP + 2 H(+). Its function is as follows. Probably mediates the hydrolysis of some nucleoside diphosphate derivatives. In vitro, it can use both NADH and ADP-ribose as substrates; however the relevance of such substrates in vivo is unclear. This chain is Nudix hydrolase 6, found in Arabidopsis thaliana (Mouse-ear cress).